A 161-amino-acid polypeptide reads, in one-letter code: DNA-directed RNA polymerase 18 kDa subunit (161 aa).

Belongs to the poxviridae DNA-directed RNA polymerase 18 kDa subunit family. As to quaternary structure, the DNA-dependent RNA polymerase used for intermediate and late genes expression consists of eight subunits Rpo30/OPG66, Rpo7/OPG90, Rpo22/OPG103, Rpo147/OPG105, Rpo18/OPG119, Rpo19/OPG131, Rpo132/OPG151 and Rpo35/OPG156. The same holoenzyme, with the addition of the transcription-specificity factor OPG109, is used for early gene expression.

The protein resides in the virion. The catalysed reaction is RNA(n) + a ribonucleoside 5'-triphosphate = RNA(n+1) + diphosphate. Its function is as follows. Part of the DNA-dependent RNA polymerase which catalyzes the transcription of viral DNA into RNA using the four ribonucleoside triphosphates as substrates. Responsible for the transcription of early, intermediate and late genes. DNA-dependent RNA polymerase associates with the early transcription factor (ETF), itself composed of OPG118 and OPG133, thereby allowing the early genes transcription. Late transcription, and probably also intermediate transcription, require newly synthesized RNA polymerase. The chain is DNA-directed RNA polymerase 18 kDa subunit (OPG119) from Vaccinia virus (strain Ankara) (VACV).